The sequence spans 219 residues: 3-dehydroquinate dehydratase (219 aa).

3-dehydroquinate contacts are provided by residues Ser10, 29–31 (EVR), and Arg59. His116 (proton donor/acceptor) is an active-site residue. Residue Lys142 is the Schiff-base intermediate with substrate of the active site. Positions 180 and 203 each coordinate 3-dehydroquinate.

This sequence belongs to the type-I 3-dehydroquinase family. Homodimer.

It catalyses the reaction 3-dehydroquinate = 3-dehydroshikimate + H2O. The protein operates within metabolic intermediate biosynthesis; chorismate biosynthesis; chorismate from D-erythrose 4-phosphate and phosphoenolpyruvate: step 3/7. In terms of biological role, involved in the third step of the chorismate pathway, which leads to the biosynthesis of aromatic amino acids. Catalyzes the cis-dehydration of 3-dehydroquinate (DHQ) and introduces the first double bond of the aromatic ring to yield 3-dehydroshikimate. The polypeptide is 3-dehydroquinate dehydratase (Methanocella arvoryzae (strain DSM 22066 / NBRC 105507 / MRE50)).